The sequence spans 279 residues: Tryptophan synthase alpha chain (279 aa).

Active-site proton acceptor residues include glutamate 50 and aspartate 61.

This sequence belongs to the TrpA family. As to quaternary structure, tetramer of two alpha and two beta chains.

The catalysed reaction is (1S,2R)-1-C-(indol-3-yl)glycerol 3-phosphate + L-serine = D-glyceraldehyde 3-phosphate + L-tryptophan + H2O. The protein operates within amino-acid biosynthesis; L-tryptophan biosynthesis; L-tryptophan from chorismate: step 5/5. In terms of biological role, the alpha subunit is responsible for the aldol cleavage of indoleglycerol phosphate to indole and glyceraldehyde 3-phosphate. In Brucella anthropi (strain ATCC 49188 / DSM 6882 / CCUG 24695 / JCM 21032 / LMG 3331 / NBRC 15819 / NCTC 12168 / Alc 37) (Ochrobactrum anthropi), this protein is Tryptophan synthase alpha chain.